The sequence spans 172 residues: Myosin regulatory light chain 2, smooth muscle minor isoform (172 aa).

An N-acetylserine modification is found at S2. T19 bears the Phosphothreonine; by MLCK mark. S20 bears the Phosphoserine; by MLCK mark. EF-hand domains follow at residues 29–64 (SQIQ…LGKN), 98–133 (DPED…MGDR), and 134–169 (FTDE…GAKD). D42, N44, D46, and D53 together coordinate Ca(2+).

Myosin is a hexamer of 2 heavy chains and 4 light chains. In terms of processing, phosphorylation increases the actin-activated myosin ATPase activity and thereby regulates the contractile activity.

Myosin regulatory subunit that plays an important role in regulation of both smooth muscle and nonmuscle cell contractile activity. Implicated in cytokinesis, receptor capping, and cell locomotion. This is Myosin regulatory light chain 2, smooth muscle minor isoform from Gallus gallus (Chicken).